A 144-amino-acid chain; its full sequence is Large ribosomal subunit protein uL15 (144 aa).

The segment at 1–52 (MRLNSLSPAEGAKHSAKRLGRGIGSGLGKTGGRGHKGQKSRTGGGVRRGFEG) is disordered. Over residues 21 to 31 (RGIGSGLGKTG) the composition is skewed to gly residues.

This sequence belongs to the universal ribosomal protein uL15 family. In terms of assembly, part of the 50S ribosomal subunit.

Functionally, binds to the 23S rRNA. This Haemophilus ducreyi (strain 35000HP / ATCC 700724) protein is Large ribosomal subunit protein uL15.